Consider the following 105-residue polypeptide: Small ribosomal subunit protein uS10 (105 aa).

The protein belongs to the universal ribosomal protein uS10 family. As to quaternary structure, part of the 30S ribosomal subunit.

Its function is as follows. Involved in the binding of tRNA to the ribosomes. This chain is Small ribosomal subunit protein uS10, found in Nostoc punctiforme (strain ATCC 29133 / PCC 73102).